A 78-amino-acid polypeptide reads, in one-letter code: Large ribosomal subunit protein bL28 (78 aa).

The protein belongs to the bacterial ribosomal protein bL28 family.

The sequence is that of Large ribosomal subunit protein bL28 from Ruthia magnifica subsp. Calyptogena magnifica.